Here is a 468-residue protein sequence, read N- to C-terminus: MRDFMDYIQLAFYDASKWNRDNSYSQLTTTANALLDFSTPERLKVNLSSLSTPHFATTYTLGTVGLIDGSISYLFTTIPLHDTPSRSTLIPLRKLVPGYRQIYPPSLPPAFPAADGRDGDLAIGGTEGDLKKKATLLHATLHLPPPTTLTGSFLRRLSPTTQLSLAFCSSRAPASKSAPQATLVTQILYDTGKYNSEFLFSTDNALFGFKGLWNFGPDPRKQNQNGGDPAREPCRSLLSLLSAGGEVYYSPVSSVVGLSTGLRFTTLPAATENPHSTFPYTLTLTLTPLTGSMSTTYSLLASPNLAFSSRFGFNVYSWESEMVAGCELWRRSKKLHTLQRNSSPLFAVDDLTWARRKMGLQDAAVSVHPERDGLPGIQRDDHDMHHHPQRPHASDSVIKVRVDQSWNIRALWEGRVKELVVSAGIALGPKSRSSLSYASSLAASGPGAAGGLSSYGWKSVGVSVLYSS.

Basic and acidic residues predominate over residues 370–386 (ERDGLPGIQRDDHDMHH). A disordered region spans residues 370 to 394 (ERDGLPGIQRDDHDMHHHPQRPHAS).

It belongs to the MDM10 family. As to quaternary structure, component of the ER-mitochondria encounter structure (ERMES) or MDM complex, composed of MMM1, MDM10, MDM12 and MDM34. Associates with the mitochondrial outer membrane sorting assembly machinery SAM(core) complex.

Its subcellular location is the mitochondrion outer membrane. In terms of biological role, component of the ERMES/MDM complex, which serves as a molecular tether to connect the endoplasmic reticulum and mitochondria. Components of this complex are involved in the control of mitochondrial shape and protein biogenesis and may function in phospholipid exchange. MDM10 is involved in the late assembly steps of the general translocase of the mitochondrial outer membrane (TOM complex). Functions in the TOM40-specific route of the assembly of outer membrane beta-barrel proteins, including the association of TOM40 with the receptor TOM22 and small TOM proteins. Can associate with the SAM(core) complex as well as the MDM12-MMM1 complex, both involved in late steps of the major beta-barrel assembly pathway, that is responsible for biogenesis of all outer membrane beta-barrel proteins. May act as a switch that shuttles between both complexes and channels precursor proteins into the TOM40-specific pathway. Plays a role in mitochondrial morphology and in the inheritance of mitochondria. The sequence is that of Mitochondrial distribution and morphology protein 10 from Ajellomyces dermatitidis (strain ER-3 / ATCC MYA-2586) (Blastomyces dermatitidis).